The primary structure comprises 602 residues: Myotubularin (602 aa).

The span at 1-16 (MATSSTPKYNSNSLEN) shows a compositional bias: polar residues. Residues 1 to 33 (MATSSTPKYNSNSLENSVRRSPGDGINHEQNDE) are disordered. The span at 17–33 (SVRRSPGDGINHEQNDE) shows a compositional bias: basic and acidic residues. One can recognise a GRAM domain in the interval 28–96 (HEQNDEISRL…GVIARIEKMG (69 aa)). A Myotubularin phosphatase domain is found at 162-537 (GWAVYDAMTE…RHLELWVNYY (376 aa)). A 1,2-diacyl-sn-glycero-3-phospho-(1D-myo-inositol-3,5-bisphosphate) contacts are provided by asparagine 287, asparagine 312, and isoleucine 313. A 1,2-diacyl-sn-glycero-3-phospho-(1D-myo-inositol-3-phosphate) contacts are provided by asparagine 287, asparagine 312, and isoleucine 313. Residue cysteine 374 is the Phosphocysteine intermediate of the active site. Residues serine 375, aspartate 376, glycine 377, tryptophan 378, aspartate 379, arginine 380, lysine 416, and arginine 420 each coordinate a 1,2-diacyl-sn-glycero-3-phospho-(1D-myo-inositol-3,5-bisphosphate). Residues serine 375, aspartate 376, glycine 377, tryptophan 378, aspartate 379, and arginine 380 each contribute to the a 1,2-diacyl-sn-glycero-3-phospho-(1D-myo-inositol-3-phosphate) site. Arginine 420 is an a 1,2-diacyl-sn-glycero-3-phospho-(1D-myo-inositol-3-phosphate) binding site. The disordered stretch occupies residues 577-602 (NSPKINRSTTSPSSPSQMMPQVQTPF). A compositionally biased stretch (low complexity) spans 584 to 602 (STTSPSSPSQMMPQVQTPF).

It belongs to the protein-tyrosine phosphatase family. Non-receptor class myotubularin subfamily.

It localises to the cytoplasm. The protein resides in the cell membrane. It is found in the cell projection. Its subcellular location is the filopodium. The protein localises to the ruffle. It localises to the late endosome. The protein resides in the myofibril. It is found in the sarcomere. The catalysed reaction is a 1,2-diacyl-sn-glycero-3-phospho-(1D-myo-inositol-3-phosphate) + H2O = a 1,2-diacyl-sn-glycero-3-phospho-(1D-myo-inositol) + phosphate. The enzyme catalyses a 1,2-diacyl-sn-glycero-3-phospho-(1D-myo-inositol-3,5-bisphosphate) + H2O = a 1,2-diacyl-sn-glycero-3-phospho-(1D-myo-inositol-5-phosphate) + phosphate. It catalyses the reaction 1,2-dioctanoyl-sn-glycero-3-phospho-(1-D-myo-inositol-3-phosphate) + H2O = 1,2-dioctanoyl-sn-glycero-3-phospho-(1D-myo-inositol) + phosphate. It carries out the reaction 1,2-dioctanoyl-sn-glycero-3-phospho-(1D-myo-inositol-3,5-bisphosphate) + H2O = 1,2-dioctanoyl-sn-glycero-3-phospho-(1D-myo-inositol-5-phosphate) + phosphate. The catalysed reaction is 1,2-dihexadecanoyl-sn-glycero-3-phospho-(1D-myo-inositol-3,5-phosphate) + H2O = 1,2-dihexadecanoyl-sn-glycero-3-phospho-(1D-myo-inositol-5-phosphate) + phosphate. Lipid phosphatase which dephosphorylates phosphatidylinositol 3-monophosphate (PI3P) and phosphatidylinositol 3,5-bisphosphate (PI(3,5)P2). This Xenopus laevis (African clawed frog) protein is Myotubularin (mtm1).